The primary structure comprises 210 residues: Pyridoxine/pyridoxamine 5'-phosphate oxidase (210 aa).

Residues 7–10 (RDEY) and Lys-65 each bind substrate. Residues 60–65 (RMVLLK), 75–76 (FT), Arg-81, Lys-82, and Gln-104 each bind FMN. Residues Tyr-122, Arg-126, and Ser-130 each coordinate substrate. FMN is bound by residues 139-140 (QS) and Trp-183. 189–191 (RLH) contributes to the substrate binding site. Arg-193 provides a ligand contact to FMN.

The protein belongs to the pyridoxamine 5'-phosphate oxidase family. In terms of assembly, homodimer. Requires FMN as cofactor.

The catalysed reaction is pyridoxamine 5'-phosphate + O2 + H2O = pyridoxal 5'-phosphate + H2O2 + NH4(+). The enzyme catalyses pyridoxine 5'-phosphate + O2 = pyridoxal 5'-phosphate + H2O2. Its pathway is cofactor metabolism; pyridoxal 5'-phosphate salvage; pyridoxal 5'-phosphate from pyridoxamine 5'-phosphate: step 1/1. The protein operates within cofactor metabolism; pyridoxal 5'-phosphate salvage; pyridoxal 5'-phosphate from pyridoxine 5'-phosphate: step 1/1. Catalyzes the oxidation of either pyridoxine 5'-phosphate (PNP) or pyridoxamine 5'-phosphate (PMP) into pyridoxal 5'-phosphate (PLP). The polypeptide is Pyridoxine/pyridoxamine 5'-phosphate oxidase (Haemophilus influenzae (strain 86-028NP)).